We begin with the raw amino-acid sequence, 397 residues long: Phosphoglycerate kinase (397 aa).

Substrate-binding positions include 21–23 (DFN), R37, 60–63 (HLGR), R119, and R152. Residues K203, G294, E325, and 354–357 (GGDS) contribute to the ATP site.

The protein belongs to the phosphoglycerate kinase family. As to quaternary structure, monomer.

It localises to the cytoplasm. The enzyme catalyses (2R)-3-phosphoglycerate + ATP = (2R)-3-phospho-glyceroyl phosphate + ADP. It functions in the pathway carbohydrate degradation; glycolysis; pyruvate from D-glyceraldehyde 3-phosphate: step 2/5. The chain is Phosphoglycerate kinase from Chlorobium luteolum (strain DSM 273 / BCRC 81028 / 2530) (Pelodictyon luteolum).